Here is a 349-residue protein sequence, read N- to C-terminus: Small ribosomal subunit protein eS6 (349 aa).

Positions 224–349 are disordered; the sequence is RRRSRLSSMR…AKKEKKQKKK (126 aa). Basic and acidic residues-rich tracts occupy residues 231 to 251 and 260 to 334; these read SMRDSRSSIGEERDKEKEKAA and KKEA…EAAK.

It belongs to the eukaryotic ribosomal protein eS6 family. As to quaternary structure, component of the small ribosomal subunit. Part of the small subunit (SSU) processome, composed of more than 70 proteins and the RNA chaperone small nucleolar RNA (snoRNA) U3. In terms of processing, ribosomal protein S6 is the major substrate of protein kinases in eukaryote ribosomes.

The protein resides in the cytoplasm. It is found in the nucleus. Its subcellular location is the nucleolus. Its function is as follows. Component of the 40S small ribosomal subunit. Plays an important role in controlling cell growth and proliferation through the selective translation of particular classes of mRNA. Part of the small subunit (SSU) processome, first precursor of the small eukaryotic ribosomal subunit. During the assembly of the SSU processome in the nucleolus, many ribosome biogenesis factors, an RNA chaperone and ribosomal proteins associate with the nascent pre-rRNA and work in concert to generate RNA folding, modifications, rearrangements and cleavage as well as targeted degradation of pre-ribosomal RNA by the RNA exosome. The polypeptide is Small ribosomal subunit protein eS6 (RpS6) (Aedes albopictus (Asian tiger mosquito)).